A 126-amino-acid chain; its full sequence is Fluoride-specific ion channel FluC (126 aa).

4 helical membrane passes run 6-26, 36-56, 69-89, and 99-119; these read FVAV…FAVL, YGTL…VGFF, LAIT…SEVV, and WAGL…AFGL. Positions 76 and 79 each coordinate Na(+).

The protein belongs to the fluoride channel Fluc/FEX (TC 1.A.43) family.

The protein localises to the cell inner membrane. It catalyses the reaction fluoride(in) = fluoride(out). With respect to regulation, na(+) is not transported, but it plays an essential structural role and its presence is essential for fluoride channel function. Its function is as follows. Fluoride-specific ion channel. Important for reducing fluoride concentration in the cell, thus reducing its toxicity. This chain is Fluoride-specific ion channel FluC, found in Cupriavidus necator (strain ATCC 17699 / DSM 428 / KCTC 22496 / NCIMB 10442 / H16 / Stanier 337) (Ralstonia eutropha).